The chain runs to 143 residues: Transcriptional regulator MraZ (143 aa).

SpoVT-AbrB domains follow at residues 5-47 and 76-119; these read TYTP…PKEE and TDEQ…DKQA.

Belongs to the MraZ family. In terms of assembly, forms oligomers.

The protein resides in the cytoplasm. The protein localises to the nucleoid. The protein is Transcriptional regulator MraZ of Nocardia farcinica (strain IFM 10152).